The primary structure comprises 20 residues: Fibrinogen beta chain (20 aa).

The segment at 1-20 is disordered; sequence ATDYEDEEFPGAVPPSVGAR. Thr2 carries O-linked (GalNAc...) threonine glycosylation. Sulfotyrosine is present on Tyr4.

As to quaternary structure, heterohexamer; disulfide linked. Contains 2 sets of 3 non-identical chains (alpha, beta and gamma). The 2 heterotrimers are in head to head conformation with the N-termini in a small central domain. In terms of processing, conversion of fibrinogen to fibrin is triggered by thrombin, which cleaves fibrinopeptides A and B from alpha and beta chains, and thus exposes the N-terminal polymerization sites responsible for the formation of the soft clot.

The protein resides in the secreted. Its function is as follows. Cleaved by the protease thrombin to yield monomers which, together with fibrinogen alpha (FGA) and fibrinogen gamma (FGG), polymerize to form an insoluble fibrin matrix. Fibrin has a major function in hemostasis as one of the primary components of blood clots. In addition, functions during the early stages of wound repair to stabilize the lesion and guide cell migration during re-epithelialization. Was originally thought to be essential for platelet aggregation, based on in vitro studies using anticoagulated blood. However subsequent studies have shown that it is not absolutely required for thrombus formation in vivo. Enhances expression of SELP in activated platelets. Maternal fibrinogen is essential for successful pregnancy. Fibrin deposition is also associated with infection, where it protects against IFNG-mediated hemorrhage. May also facilitate the antibacterial immune response via both innate and T-cell mediated pathways. The chain is Fibrinogen beta chain (FGB) from Elephas maximus (Indian elephant).